The primary structure comprises 291 residues: N-acetylmannosamine kinase (291 aa).

Residues 5 to 12 (AIDIGGTK) and 132 to 139 (GVGGGVVS) each bind ATP. 4 residues coordinate Zn(2+): His-156, Cys-166, Cys-168, and Cys-173.

The protein belongs to the ROK (NagC/XylR) family. NanK subfamily. In terms of assembly, homodimer.

It carries out the reaction an N-acyl-D-mannosamine + ATP = an N-acyl-D-mannosamine 6-phosphate + ADP + H(+). The protein operates within amino-sugar metabolism; N-acetylneuraminate degradation; D-fructose 6-phosphate from N-acetylneuraminate: step 2/5. Its function is as follows. Catalyzes the phosphorylation of N-acetylmannosamine (ManNAc) to ManNAc-6-P. This is N-acetylmannosamine kinase from Escherichia coli O6:K15:H31 (strain 536 / UPEC).